Reading from the N-terminus, the 93-residue chain is Acylphosphatase (93 aa).

The Acylphosphatase-like domain occupies arginine 6–arginine 93. Active-site residues include arginine 21 and asparagine 40.

This sequence belongs to the acylphosphatase family.

It carries out the reaction an acyl phosphate + H2O = a carboxylate + phosphate + H(+). In Streptomyces coelicolor (strain ATCC BAA-471 / A3(2) / M145), this protein is Acylphosphatase (acyP).